A 162-amino-acid polypeptide reads, in one-letter code: NADH-quinone oxidoreductase subunit I (162 aa).

2 consecutive 4Fe-4S ferredoxin-type domains span residues 53-83 (LRRY…IESE) and 93-122 (TRYD…EGPN). Positions 63, 66, 69, 73, 102, 105, 108, and 112 each coordinate [4Fe-4S] cluster.

Belongs to the complex I 23 kDa subunit family. In terms of assembly, NDH-1 is composed of 14 different subunits. Subunits NuoA, H, J, K, L, M, N constitute the membrane sector of the complex. Requires [4Fe-4S] cluster as cofactor.

The protein resides in the cell inner membrane. The catalysed reaction is a quinone + NADH + 5 H(+)(in) = a quinol + NAD(+) + 4 H(+)(out). In terms of biological role, NDH-1 shuttles electrons from NADH, via FMN and iron-sulfur (Fe-S) centers, to quinones in the respiratory chain. The immediate electron acceptor for the enzyme in this species is believed to be ubiquinone. Couples the redox reaction to proton translocation (for every two electrons transferred, four hydrogen ions are translocated across the cytoplasmic membrane), and thus conserves the redox energy in a proton gradient. The protein is NADH-quinone oxidoreductase subunit I of Erythrobacter litoralis (strain HTCC2594).